Consider the following 134-residue polypeptide: MPSADTEFIRVIRIKSANGSEKMLEIPAKLDLERPKRPRTVFTDEQLEKLEESFNTSGYLSGSTRAKLAESLGLSDNQVKVWFQNRRTKQKKIDSRDPIKPETLKPAENYQNVYQNYQNYWTAAAFLSNNVISS.

The homeobox DNA-binding region spans 35–94; it reads PKRPRTVFTDEQLEKLEESFNTSGYLSGSTRAKLAESLGLSDNQVKVWFQNRRTKQKKID.

The protein localises to the nucleus. The sequence is that of Homeobox protein ceh-5 (ceh-5) from Caenorhabditis elegans.